A 266-amino-acid polypeptide reads, in one-letter code: uncharacterized protein (266 aa).

Positions 35–131 (VLVGEGVLVK…WMLHIERCVT (97 aa)) constitute a PH domain. The FYVE-type zinc finger occupies 152-212 (DGEAVKCMVC…VCDHCFDSLS (61 aa)). C158, C161, C175, C178, C183, C186, C204, and C207 together coordinate Zn(2+). The tract at residues 213–266 (SATPGQEESEPKTGNRLHHEDSSSDSEDEVNGSGRSSNESRPTFYREDVQQPAT) is disordered. Composition is skewed to basic and acidic residues over residues 221-234 (SEPK…HEDS) and 256-266 (FYREDVQQPAT).

This is an uncharacterized protein from Caenorhabditis elegans.